We begin with the raw amino-acid sequence, 397 residues long: Probable transport protein MmpL6 (397 aa).

The next 5 membrane-spanning stretches (helical) occupy residues Tyr-190 to Ile-210, Leu-214 to Leu-234, Leu-242 to Val-262, Thr-293 to Phe-313, and Leu-328 to Leu-348.

The protein belongs to the resistance-nodulation-cell division (RND) (TC 2.A.6) family. MmpL subfamily.

Its subcellular location is the cell membrane. The polypeptide is Probable transport protein MmpL6 (mmpL6) (Mycobacterium tuberculosis (strain CDC 1551 / Oshkosh)).